The sequence spans 155 residues: DNA-directed RNA polymerase II subunit rpb4 (155 aa).

This sequence belongs to the eukaryotic RPB4 RNA polymerase subunit family. Component of the RNA polymerase II (Pol II) complex consisting of 12 subunits. RPB4 and RPB7 form a subcomplex that protrudes from the 10-subunit Pol II core complex.

Its subcellular location is the nucleus. Its function is as follows. DNA-dependent RNA polymerase catalyzes the transcription of DNA into RNA using the four ribonucleoside triphosphates as substrates. Component of RNA polymerase II which synthesizes mRNA precursors and many functional non-coding RNAs. Pol II is the central component of the basal RNA polymerase II transcription machinery. It is composed of mobile elements that move relative to each other. RPB4 is part of a subcomplex with RPB7 that binds to a pocket formed by RPB1, RPB2 and RPB6 at the base of the clamp element. The RPB4-RPB7 subcomplex seems to lock the clamp via RPB7 in the closed conformation thus preventing double-stranded DNA to enter the active site cleft. The RPB4-RPB7 subcomplex binds single-stranded DNA and RNA. The sequence is that of DNA-directed RNA polymerase II subunit rpb4 (polr2d) from Dictyostelium discoideum (Social amoeba).